Here is a 1338-residue protein sequence, read N- to C-terminus: Terpene cyclase-glycosyl transferase fusion protein fsoA (1338 aa).

Residues 1–687 (MDMAPDELDE…RFLDRTDEPD (687 aa)) are terpenne cyclase. PFTB repeat units lie at residues 19–61 (LEQA…PALN), 69–111 (AAAL…RLLG), and 267–307 (LRRC…SLEH). Residue Asp412 is the Proton donor of the active site. 3 PFTB repeats span residues 434-475 (VEMG…DSLV), 515-556 (AQKA…AFCG), and 564-615 (ALRA…LRFR). The glycosyltransferase stretch occupies residues 688 to 1338 (QDRDLPLLMT…NMLLGEGCQG (651 aa)).

This sequence in the N-terminal section; belongs to the terpene cyclase/mutase family. The protein in the C-terminal section; belongs to the glycosyltransferase 28 family.

It carries out the reaction (S)-2,3-epoxysqualene = isomotiol. The enzyme catalyses isomotiol + UDP-alpha-D-glucose = 3-O-(beta-D-glucopyranosyl)-isomotiol + UDP + H(+). The catalysed reaction is 2alpha-hydroxyisomotiol + UDP-alpha-D-glucose = 3-O-(beta-D-glucopyranosyl)-2alpha-hydroxyisomotiol + UDP + H(+). The protein operates within secondary metabolite biosynthesis; terpenoid biosynthesis. Terpene cyclase-glycosyl transferase fusion protein; part of the gene cluster that mediates the biosynthesis of the enfumafungin-type antibiotic, fuscoatroside. Within the pathway, fsoA plays two important roles, the cyclization of 2,3(S)-oxidosqualene into isomotiol via its terpene cyclase (TC) domain and the C3 glycosylation of several intermediates via its glycosyltransferase (GT) domain. The fuscoatroside biosynthesis is initiated by the cyclization of 2,3(S)-oxidosqualene through FsoA's TC domain, leading to the formation of the fernane skeleton isomotiol, harboring a fernane triterpene skeleton with a C8-C9 double bond. Subsequently, C2-alpha-hydroxylation mediated by fsoD results in the production of 2-alpha-hydroxy-isomotiol, which is further acetylated by fsoF. The GT domain of FsoA may convert isomotiol, 2-alpha-hydroxy-isomotiol, and the acetylated derivative of 2-alpha-hydroxy-isomotiol into their corresponding glycosides 3-O-(beta-D-glucopyranosyl)-isomotiol, 3-O-(beta-D-glucopyranosyl)-2-alpha-hydroxy-isomotiol, and 3-O-(beta-D-glucopyranosyl)-2-alpha-acetoxy-isomotiol, which then undergo oxidative cleavage under the action of fsoE to form s 2-deacetoxy-fuscoatroside, 2-deacetyl-fuscoatroside, and fuscoatroside, respectively. Although hydroxylation followed by acetylation of 3-O-(beta-D-glucopyranosyl)-isomotiol and 2-deacetoxy-fuscoatroside by fsoD and fsoF could not be ruled out, this process is likely to occur with difficulty due to bulky steric hindrance caused by the presence of a glycan at C3 in these compounds. Interestingly, fsoE can also utilize the aglycones isomotiol and 2-alpha-hydroxy-isomotiol as substrates to generate 19-beta-hydroxy-isomotiol and 2-alpha,19-beta-dihydroxy-isomotiol, respectively. These reactions occur with lower efficiency. Finally, fsoE can further convert 2-alpha,19-beta-dihydroxy-isomotiol into 2-alpha-hydroxy-ismotiol-19-one and 2-alpha-hydroxy-ismotiol-19-one into 2-deacetyl-3-deglucopyranosyl-fuscoatroside. This chain is Terpene cyclase-glycosyl transferase fusion protein fsoA, found in Humicola fuscoatra.